Consider the following 340-residue polypeptide: Ketol-acid reductoisomerase (NADP(+)) (340 aa).

In terms of domain architecture, KARI N-terminal Rossmann spans 3–182 (VQMEYEKDVK…GAARVGLLET (180 aa)). NADP(+) contacts are provided by residues 26-29 (YGSQ), R49, S53, and 83-86 (DEIQ). The active site involves H108. G134 is an NADP(+) binding site. One can recognise a KARI C-terminal knotted domain in the interval 183–328 (TYKEETEEDL…AELRKAMPFV (146 aa)). 4 residues coordinate Mg(2+): D191, E195, E227, and E231. S252 contacts substrate.

Belongs to the ketol-acid reductoisomerase family. The cofactor is Mg(2+).

It carries out the reaction (2R)-2,3-dihydroxy-3-methylbutanoate + NADP(+) = (2S)-2-acetolactate + NADPH + H(+). The catalysed reaction is (2R,3R)-2,3-dihydroxy-3-methylpentanoate + NADP(+) = (S)-2-ethyl-2-hydroxy-3-oxobutanoate + NADPH + H(+). Its pathway is amino-acid biosynthesis; L-isoleucine biosynthesis; L-isoleucine from 2-oxobutanoate: step 2/4. The protein operates within amino-acid biosynthesis; L-valine biosynthesis; L-valine from pyruvate: step 2/4. Its function is as follows. Involved in the biosynthesis of branched-chain amino acids (BCAA). Catalyzes an alkyl-migration followed by a ketol-acid reduction of (S)-2-acetolactate (S2AL) to yield (R)-2,3-dihydroxy-isovalerate. In the isomerase reaction, S2AL is rearranged via a Mg-dependent methyl migration to produce 3-hydroxy-3-methyl-2-ketobutyrate (HMKB). In the reductase reaction, this 2-ketoacid undergoes a metal-dependent reduction by NADPH to yield (R)-2,3-dihydroxy-isovalerate. The chain is Ketol-acid reductoisomerase (NADP(+)) from Streptococcus pneumoniae (strain CGSP14).